Reading from the N-terminus, the 487-residue chain is Histamine H1 receptor (487 aa).

Over 1–29 (MSLPNSSCLLEDKMCEGNKTTMASPQLMP) the chain is Extracellular. 2 N-linked (GlcNAc...) asparagine glycosylation sites follow: N5 and N18. Residues 30–50 (LVVVLSTISLVTVGLNLLVLY) form a helical membrane-spanning segment. The Cytoplasmic segment spans residues 51-64 (AVRSERKLHTVGNL). Residues 65–89 (YIVSLSVADLIVGAVVMPMNILYLL) form a helical membrane-spanning segment. At 90–97 (MSKWSLGR) the chain is on the extracellular side. Residues 98-123 (PLCLFWLSMDYVASTASIFSVFILCI) traverse the membrane as a helical segment. C100 and C180 are joined by a disulfide. Histamine-binding residues include D107 and T112. An important for agonist binding region spans residues 107–112 (DYVAST). Over 124–144 (DRYRSVQQPLRYLKYRTKTRA) the chain is Cytoplasmic. T140 and T142 each carry phosphothreonine. The helical transmembrane segment at 145 to 164 (SATILGAWFLSFLWVIPILG) threads the bilayer. Residues 165-188 (WNHFRQQISVRREDKCETDFYDVT) are Extracellular-facing. The helical transmembrane segment at 189–211 (WFKVMTAIINFYLPTLLMLWFYA) threads the bilayer. N198 provides a ligand contact to histamine. The Cytoplasmic segment spans residues 212 to 416 (KIYKAVQKHC…MNRERKAAKQ (205 aa)). Position 230 is a phosphoserine (S230). Residues 238 to 261 (KLRPENPKGDAKKPGKESPWEVLK) show a composition bias toward basic and acidic residues. The segment at 238–286 (KLRPENPKGDAKKPGKESPWEVLKRKPKDAGGGSVLKSPSQTPKEMKSP) is disordered. Phosphothreonine is present on T279. S344 and S347 each carry phosphoserine. The interval 345-379 (EISEDQMLGDSQSFSRTDSDTTTETAPGKGKLRSG) is disordered. A compositionally biased stretch (polar residues) spans 353-369 (GDSQSFSRTDSDTTTET). A phosphoserine mark is found at S380, S396, and S398. Residues 417 to 440 (LGFIMAAFILCWIPYFIFFMVIAF) traverse the membrane as a helical segment. The interval 424–428 (FILCW) is important for agonist binding. Y431 provides a ligand contact to histamine. An intrachain disulfide couples C441 to C444. Residues 441-446 (CKNCCN) lie on the Extracellular side of the membrane. The helical transmembrane segment at 447–469 (EHLHMFTIWLGYINSTLNPLIYP) threads the bilayer. Residues 470–487 (LCNENFKKTFKRILHIRS) lie on the Cytoplasmic side of the membrane.

Belongs to the G-protein coupled receptor 1 family. Post-translationally, phosphorylation at sites in the second and third cytoplasmic loops independently contribute to agonist-induced receptor down-regulation.

The protein resides in the cell membrane. In terms of biological role, G-protein-coupled receptor for histamine, a biogenic amine that functions as an immune modulator and a neurotransmitter. Through the H1 receptor, histamine mediates the contraction of smooth muscles and increases capillary permeability due to contraction of terminal venules. Also mediates neurotransmission in the central nervous system and thereby regulates circadian rhythms, emotional and locomotor activities as well as cognitive functions. The chain is Histamine H1 receptor from Pongo pygmaeus (Bornean orangutan).